Here is a 370-residue protein sequence, read N- to C-terminus: tRNA-specific 2-thiouridylase MnmA (370 aa).

ATP is bound by residues 19 to 26 (AMSGGVDS) and leucine 45. Cysteine 113 acts as the Nucleophile in catalysis. A disulfide bridge links cysteine 113 with cysteine 209. Residue glycine 137 coordinates ATP. The segment at 159 to 161 (RDQ) is interaction with tRNA. The active-site Cysteine persulfide intermediate is cysteine 209.

It belongs to the MnmA/TRMU family.

Its subcellular location is the cytoplasm. The catalysed reaction is S-sulfanyl-L-cysteinyl-[protein] + uridine(34) in tRNA + AH2 + ATP = 2-thiouridine(34) in tRNA + L-cysteinyl-[protein] + A + AMP + diphosphate + H(+). In terms of biological role, catalyzes the 2-thiolation of uridine at the wobble position (U34) of tRNA, leading to the formation of s(2)U34. In Zymomonas mobilis subsp. mobilis (strain ATCC 31821 / ZM4 / CP4), this protein is tRNA-specific 2-thiouridylase MnmA.